A 161-amino-acid polypeptide reads, in one-letter code: Beta-lactoglobulin-1 (161 aa).

2 disulfides stabilise this stretch: cysteine 66–cysteine 159 and cysteine 106–cysteine 119.

Belongs to the calycin superfamily. Lipocalin family. As to quaternary structure, monomer. As to expression, synthesized in mammary gland and secreted in milk.

Its subcellular location is the secreted. Primary component of whey, it binds retinol and is probably involved in the transport of that molecule. In Canis lupus familiaris (Dog), this protein is Beta-lactoglobulin-1 (LGB1).